The primary structure comprises 29 residues: Orphan peptide CllNtx (29 aa).

In terms of processing, contains 3 disulfide bonds. As to expression, expressed by the venom gland.

The protein localises to the secreted. Its function is as follows. May act as a toxin. This is Orphan peptide CllNtx from Centruroides limpidus (Mexican scorpion).